A 147-amino-acid chain; its full sequence is Diaminohydroxyphosphoribosylamino-pyrimidine deaminase (147 aa).

Positions 1 to 123 constitute a CMP/dCMP-type deaminase domain; sequence MNDIFYMKRA…YLKKHGICVK (123 aa). Histidine 50 provides a ligand contact to Zn(2+). The active-site Proton donor is the glutamate 52. Zn(2+) is bound by residues cysteine 75 and cysteine 84.

This sequence belongs to the cytidine and deoxycytidylate deaminase family. Requires Zn(2+) as cofactor.

It carries out the reaction 2,5-diamino-6-hydroxy-4-(5-phosphoribosylamino)-pyrimidine + H2O + H(+) = 5-amino-6-(5-phospho-D-ribosylamino)uracil + NH4(+). It functions in the pathway cofactor biosynthesis; riboflavin biosynthesis; 5-amino-6-(D-ribitylamino)uracil from GTP: step 2/4. This is Diaminohydroxyphosphoribosylamino-pyrimidine deaminase (ribD1) from Buchnera aphidicola subsp. Acyrthosiphon pisum (strain APS) (Acyrthosiphon pisum symbiotic bacterium).